The sequence spans 216 residues: uncharacterized protein (216 aa).

A helical transmembrane segment spans residues 7 to 29; the sequence is ILVIFFLIFFIGFEFSDMTLAFI.

The protein localises to the membrane. This is an uncharacterized protein from Archaeoglobus fulgidus (strain ATCC 49558 / DSM 4304 / JCM 9628 / NBRC 100126 / VC-16).